Reading from the N-terminus, the 296-residue chain is UDP-N-acetylglucosamine transporter TMEM241 (296 aa).

A run of 10 helical transmembrane segments spans residues 7 to 29 (LVGL…VLSV), 32 to 52 (FTYP…LLHV), 67 to 87 (SHVL…YAGS), 93 to 113 (LAIP…CGYQ), 121 to 141 (TSPA…CLPF), 146 to 166 (FNPD…AYKI), 187 to 207 (IFSV…FSVL), 211 to 231 (FLYF…GFFL), 250 to 270 (WIFF…DAIL), and 271 to 291 (TSAT…LVFS).

The protein belongs to the nucleotide-sugar transporter family. SLC35A subfamily.

The protein localises to the golgi apparatus. The protein resides in the cis-Golgi network membrane. Golgi-localized UDP-N-acetylglucosamine (UDP-GlcNAc) transporter that transports UDP-N-acetylglucosamine into Golgi lumen. Contributes to lysosomal targeting of NPC2, a key protein required for lysosomal cholesterol exiting, and that utilizes the mannose-6-phosphate (M6P) modification pathway for its lysosomal targeting. This is UDP-N-acetylglucosamine transporter TMEM241 from Homo sapiens (Human).